The sequence spans 96 residues: uncharacterized protein (96 aa).

In terms of biological role, essential for virus function. This is an uncharacterized protein from Saccharolobus solfataricus (Sulfolobus solfataricus).